The sequence spans 194 residues: Phosphoheptose isomerase (194 aa).

The region spanning 37-194 is the SIS domain; that stretch reads IADTFKAGGK…LIEKEMVAQG (158 aa). 52-54 is a binding site for substrate; the sequence is NGG. Zn(2+)-binding residues include His61 and Glu65. Substrate is bound by residues Glu65, 93–94, 119–121, Ser124, and Gln172; these read ND and STS. Zn(2+)-binding residues include Gln172 and His180.

This sequence belongs to the SIS family. GmhA subfamily. In terms of assembly, homotetramer. Zn(2+) serves as cofactor.

It is found in the cytoplasm. The enzyme catalyses 2 D-sedoheptulose 7-phosphate = D-glycero-alpha-D-manno-heptose 7-phosphate + D-glycero-beta-D-manno-heptose 7-phosphate. It functions in the pathway carbohydrate biosynthesis; D-glycero-D-manno-heptose 7-phosphate biosynthesis; D-glycero-alpha-D-manno-heptose 7-phosphate and D-glycero-beta-D-manno-heptose 7-phosphate from sedoheptulose 7-phosphate: step 1/1. Catalyzes the isomerization of sedoheptulose 7-phosphate in D-glycero-D-manno-heptose 7-phosphate. The polypeptide is Phosphoheptose isomerase (Sodalis glossinidius (strain morsitans)).